A 504-amino-acid polypeptide reads, in one-letter code: Anaerobic nitric oxide reductase transcription regulator NorR (504 aa).

The residue at position 57 (Asp57) is a 4-aspartylphosphate. The region spanning 187–416 (MIGLSPGMTQ…LEHAIHRAVV (230 aa)) is the Sigma-54 factor interaction domain. ATP is bound by residues 215–222 (GETGTGKE) and 278–287 (ADNGTLFLDE). Positions 479–498 (WAASARMLETDVANLHRLAK) form a DNA-binding region, H-T-H motif.

The protein operates within nitrogen metabolism; nitric oxide reduction. Its function is as follows. Required for the expression of anaerobic nitric oxide (NO) reductase, acts as a transcriptional activator for at least the norVW operon. Activation also requires sigma-54. The sequence is that of Anaerobic nitric oxide reductase transcription regulator NorR from Escherichia coli (strain SMS-3-5 / SECEC).